The sequence spans 388 residues: Flap endonuclease 1 (388 aa).

Residues 1-104 (MGILGLSKLI…GELAKRAERR (104 aa)) form an N-domain region. Aspartate 34 lines the Mg(2+) pocket. The DNA site is built by arginine 47 and arginine 70. Mg(2+) is bound by residues aspartate 86, glutamate 158, glutamate 160, aspartate 179, and aspartate 181. The tract at residues 122 to 253 (EIEKFNRRLV…KRAIELIKTY (132 aa)) is I-domain. DNA is bound at residue glutamate 158. Positions 231 and 233 each coordinate DNA. A Mg(2+)-binding site is contributed by aspartate 233. An interaction with PCNA region spans residues 336–344 (TQVRLDSFF). The disordered stretch occupies residues 351 to 388 (PNATAAAKRKAEEIKKSANNKKAKTSGGSGAARGRRPK).

The protein belongs to the XPG/RAD2 endonuclease family. FEN1 subfamily. Interacts with PCNA. Three molecules of FEN1 bind to one PCNA trimer with each molecule binding to one PCNA monomer. PCNA stimulates the nuclease activity without altering cleavage specificity. Mg(2+) is required as a cofactor. Post-translationally, phosphorylated. Phosphorylation upon DNA damage induces relocalization to the nuclear plasma.

It is found in the nucleus. The protein localises to the nucleolus. Its subcellular location is the nucleoplasm. The protein resides in the mitochondrion. Functionally, structure-specific nuclease with 5'-flap endonuclease and 5'-3' exonuclease activities involved in DNA replication and repair. During DNA replication, cleaves the 5'-overhanging flap structure that is generated by displacement synthesis when DNA polymerase encounters the 5'-end of a downstream Okazaki fragment. It enters the flap from the 5'-end and then tracks to cleave the flap base, leaving a nick for ligation. Also involved in the long patch base excision repair (LP-BER) pathway, by cleaving within the apurinic/apyrimidinic (AP) site-terminated flap. Acts as a genome stabilization factor that prevents flaps from equilibrating into structures that lead to duplications and deletions. Also possesses 5'-3' exonuclease activity on nicked or gapped double-stranded DNA, and exhibits RNase H activity. Also involved in replication and repair of rDNA and in repairing mitochondrial DNA. This is Flap endonuclease 1 from Drosophila mojavensis (Fruit fly).